The following is a 118-amino-acid chain: Large ribosomal subunit protein bL19 (118 aa).

The protein belongs to the bacterial ribosomal protein bL19 family.

Functionally, this protein is located at the 30S-50S ribosomal subunit interface and may play a role in the structure and function of the aminoacyl-tRNA binding site. The sequence is that of Large ribosomal subunit protein bL19 from Teredinibacter turnerae (strain ATCC 39867 / T7901).